A 29-amino-acid polypeptide reads, in one-letter code: 28 kDa protein (29 aa).

The sequence is that of 28 kDa protein from Tritrichomonas foetus (Trichomonas foetus).